A 421-amino-acid chain; its full sequence is Glycosaminoglycan xylosylkinase homolog (421 aa).

An N-terminal signal peptide occupies residues 1–21 (MNKRSVIIAGIVASLLGLALG). Asn83 is a glycosylation site (N-linked (GlcNAc...) asparagine). ATP-binding residues include Gln131 and Lys147. Asp166 is a Mn(2+) binding site. Disulfide bonds link Cys225–Cys240 and Cys230–Cys233. 252–255 (IYIV) lines the ATP pocket. 2 disulfide bridges follow: Cys285–Cys351 and Cys352–Cys409. Asp314 is a catalytic residue. ATP-binding residues include Glu319 and Asp329. Asp329 contacts Mn(2+).

Belongs to the FAM20 family. It depends on Mn(2+) as a cofactor.

It localises to the golgi apparatus. The protein resides in the endoplasmic reticulum. The enzyme catalyses 3-O-(beta-D-galactosyl-(1-&gt;3)-beta-D-galactosyl-(1-&gt;4)-beta-D-xylosyl)-L-seryl-[protein] + ATP = 3-O-(beta-D-galactosyl-(1-&gt;3)-beta-D-galactosyl-(1-&gt;4)-beta-D-2-O-phosphoxylosyl)-L-seryl-[protein] + ADP + H(+). Functionally, kylose kinase that mediates the 2-O-phosphorylation of xylose in the glycosaminoglycan-protein linkage region of proteoglycans. This Drosophila melanogaster (Fruit fly) protein is Glycosaminoglycan xylosylkinase homolog.